A 321-amino-acid chain; its full sequence is o-succinylbenzoate synthase (321 aa).

Residue Lys134 is the Proton donor of the active site. Asp162, Glu191, and Asp214 together coordinate Mg(2+). Catalysis depends on Lys236, which acts as the Proton acceptor.

It belongs to the mandelate racemase/muconate lactonizing enzyme family. MenC type 1 subfamily. A divalent metal cation is required as a cofactor.

It carries out the reaction (1R,6R)-6-hydroxy-2-succinyl-cyclohexa-2,4-diene-1-carboxylate = 2-succinylbenzoate + H2O. It participates in quinol/quinone metabolism; 1,4-dihydroxy-2-naphthoate biosynthesis; 1,4-dihydroxy-2-naphthoate from chorismate: step 4/7. Its pathway is quinol/quinone metabolism; menaquinone biosynthesis. Functionally, converts 2-succinyl-6-hydroxy-2,4-cyclohexadiene-1-carboxylate (SHCHC) to 2-succinylbenzoate (OSB). This chain is o-succinylbenzoate synthase, found in Klebsiella pneumoniae (strain 342).